A 232-amino-acid chain; its full sequence is tRNA (guanine-N(1)-)-methyltransferase (232 aa).

Residues Gly-112 and 132–137 each bind S-adenosyl-L-methionine; that span reads IGDYVL.

This sequence belongs to the RNA methyltransferase TrmD family. Homodimer.

The protein resides in the cytoplasm. It carries out the reaction guanosine(37) in tRNA + S-adenosyl-L-methionine = N(1)-methylguanosine(37) in tRNA + S-adenosyl-L-homocysteine + H(+). Specifically methylates guanosine-37 in various tRNAs. This Anaplasma phagocytophilum (strain HZ) protein is tRNA (guanine-N(1)-)-methyltransferase.